A 281-amino-acid chain; its full sequence is sn-glycerol-3-phosphate transport system permease protein UgpE (281 aa).

A run of 6 helical transmembrane segments spans residues 16–36 (LILG…AATL), 85–105 (FSIT…IVWF), 113–133 (FFWM…FPTV), 142–162 (LDSY…TFLF), 202–222 (ALFV…LLII), and 247–267 (WNSV…IVLV). Residues 77-268 (LLNSFVMAFS…IPPVVIVLVM (192 aa)) form the ABC transmembrane type-1 domain.

Belongs to the binding-protein-dependent transport system permease family. UgpAE subfamily. The complex is composed of two ATP-binding proteins (UgpC), two transmembrane proteins (UgpA and UgpE) and a solute-binding protein (UgpB).

It localises to the cell inner membrane. Part of the ABC transporter complex UgpBAEC involved in sn-glycerol-3-phosphate (G3P) import. Probably responsible for the translocation of the substrate across the membrane. Can also transport glycerophosphoryl diesters, which are hydrolyzed to G3P and alcohol during transport. The G3P moiety can be detected in the cytoplasm whereas the corresponding alcohol is usually found in the culture medium. It was proposed by Yang et al that the complex could also transport glycerol-2-phosphate (G2P) in vivo, but it was shown later by Wuttge et al that UgpB does not bind G2P, questioning this transport activity. G2P might be converted in the periplasm to G3P before its transport. The sequence is that of sn-glycerol-3-phosphate transport system permease protein UgpE from Escherichia coli (strain K12).